Here is a 166-residue protein sequence, read N- to C-terminus: Interferon gamma-related (166 aa).

The first 26 residues, 1-26 (MYCRLNMVYLICALLLIVSLQGTVGA), serve as a signal peptide directing secretion. The N-linked (GlcNAc...) asparagine glycan is linked to Asn-91.

The protein belongs to the type II (or gamma) interferon family. In terms of assembly, homodimer. As to expression, strongly expressed in spleen. Also detected at lower levels in gill, kidney, heart, brain and intestine. In immune cell populations, expressed at highest levels in peripheral blood leukocytes and at lower levels in splenocytes, granulocytes, monocytes and macrophages.

Its subcellular location is the secreted. Cytokine which binds to interferon gamma receptor 1 (ifngr1). Has activating effects on primary macrophages. Induces nitric oxide production and phagocytic responses in macrophages. Primes monocytes for production of reactive oxygen intermediates (ROI), although the effect is short-lived. Also has inhibitory effects on monocyte priming by ifng1 (interferon gamma 1) and tnfb (TNF-alpha 2). Stimulates phosphorylation of the JAK/STAT signal transducer stat1, but fails to induce stat1 nuclear localization. Promotes increased expression of a number of genes important for macrophage activity, including the interferon regulatory factors irf2 and irf9. The polypeptide is Interferon gamma-related (Carassius auratus (Goldfish)).